The following is a 565-amino-acid chain: Augmin complex subunit dgt3 (565 aa).

Coiled coils occupy residues 135–171 (ELQL…AKKA) and 212–241 (QDYD…IQFY).

The protein belongs to the HAUS3 family. Component of the augmin complex composed of dgt2, dgt3, dgt4, dgt5, dgt6, msd1, msd5 and wac. The complex interacts directly or indirectly with microtubules and is required for centrosome-independent generation of spindle microtubules.

The protein resides in the cytoplasm. The protein localises to the cytoskeleton. Its subcellular location is the spindle. In terms of biological role, as part of the augmin complex, plays a role in centrosome-independent generation of spindle microtubules. The complex is required for mitotic spindle assembly through its involvement in localizing gamma-tubulin to spindle microtubules. The polypeptide is Augmin complex subunit dgt3 (Drosophila melanogaster (Fruit fly)).